Reading from the N-terminus, the 176-residue chain is Probable inosine/xanthosine triphosphatase (176 aa).

D36 lines the Mg(2+) pocket.

The protein belongs to the YjjX NTPase family. As to quaternary structure, homodimer. The cofactor is Mg(2+). Mn(2+) serves as cofactor.

It catalyses the reaction XTP + H2O = XDP + phosphate + H(+). The enzyme catalyses ITP + H2O = IDP + phosphate + H(+). Its function is as follows. Phosphatase that hydrolyzes non-canonical purine nucleotides such as XTP and ITP to their respective diphosphate derivatives. Probably excludes non-canonical purines from DNA/RNA precursor pool, thus preventing their incorporation into DNA/RNA and avoiding chromosomal lesions. This chain is Probable inosine/xanthosine triphosphatase, found in Saccharolobus solfataricus (strain ATCC 35092 / DSM 1617 / JCM 11322 / P2) (Sulfolobus solfataricus).